The chain runs to 182 residues: Adenine phosphoribosyltransferase (182 aa).

This sequence belongs to the purine/pyrimidine phosphoribosyltransferase family. In terms of assembly, homodimer.

Its subcellular location is the cytoplasm. It catalyses the reaction AMP + diphosphate = 5-phospho-alpha-D-ribose 1-diphosphate + adenine. It participates in purine metabolism; AMP biosynthesis via salvage pathway; AMP from adenine: step 1/1. Its function is as follows. Catalyzes a salvage reaction resulting in the formation of AMP, that is energically less costly than de novo synthesis. The protein is Adenine phosphoribosyltransferase of Pseudomonas putida (strain GB-1).